A 420-amino-acid polypeptide reads, in one-letter code: DNA replication and repair protein RecF (420 aa).

Residue 30–37 (GRNGQGKT) participates in ATP binding. A disordered region spans residues 175–214 (RKGGFARKGGFAPLGPPEGRPEGPPEGRTGGSATSGPPSR).

The protein belongs to the RecF family.

The protein localises to the cytoplasm. The RecF protein is involved in DNA metabolism; it is required for DNA replication and normal SOS inducibility. RecF binds preferentially to single-stranded, linear DNA. It also seems to bind ATP. In Nocardioides sp. (strain ATCC BAA-499 / JS614), this protein is DNA replication and repair protein RecF.